Here is a 45-residue protein sequence, read N- to C-terminus: Large ribosomal subunit protein bL34 (45 aa).

The interval 1 to 24 is disordered; that stretch reads MTKRTFGGTSRKRKRVSGFRVRMR. A compositionally biased stretch (basic residues) spans 10–24; the sequence is SRKRKRVSGFRVRMR.

This sequence belongs to the bacterial ribosomal protein bL34 family.

In Prochlorococcus marinus (strain MIT 9303), this protein is Large ribosomal subunit protein bL34.